The sequence spans 1067 residues: Carbamoyl phosphate synthase large chain (1067 aa).

Residues 1 to 401 (MPLNKDIKKV…AFLKGIRSLE (401 aa)) form a carboxyphosphate synthetic domain region. ATP contacts are provided by R129, R169, G175, G176, K208, V210, E215, G241, I242, H243, Q284, and E298. The ATP-grasp 1 domain occupies 133–327 (RDMMNRINQP…IAKVAAKIAL (195 aa)). Residues Q284, E298, and N300 each contribute to the Mg(2+) site. Q284, E298, and N300 together coordinate Mn(2+). Residues 402 to 549 (IGKYSLEHKK…YSTYEQYDEV (148 aa)) form an oligomerization domain region. A carbamoyl phosphate synthetic domain region spans residues 550 to 932 (VVSDNKKVVV…ALYKGFVGAS (383 aa)). The 191-residue stretch at 674 to 864 (DDLLERLNIA…IVDIATRIML (191 aa)) folds into the ATP-grasp 2 domain. ATP contacts are provided by R710, K749, L751, E755, G780, V781, H782, S783, Q823, and E835. Residues Q823, E835, and N837 each coordinate Mg(2+). Residues Q823, E835, and N837 each coordinate Mn(2+). The region spanning 933–1067 (MYTGDKGKTI…NRELEVFNLI (135 aa)) is the MGS-like domain. The tract at residues 933–1067 (MYTGDKGKTI…NRELEVFNLI (135 aa)) is allosteric domain.

Belongs to the CarB family. In terms of assembly, composed of two chains; the small (or glutamine) chain promotes the hydrolysis of glutamine to ammonia, which is used by the large (or ammonia) chain to synthesize carbamoyl phosphate. Tetramer of heterodimers (alpha,beta)4. The cofactor is Mg(2+). Mn(2+) is required as a cofactor.

It catalyses the reaction hydrogencarbonate + L-glutamine + 2 ATP + H2O = carbamoyl phosphate + L-glutamate + 2 ADP + phosphate + 2 H(+). The catalysed reaction is hydrogencarbonate + NH4(+) + 2 ATP = carbamoyl phosphate + 2 ADP + phosphate + 2 H(+). The protein operates within amino-acid biosynthesis; L-arginine biosynthesis; carbamoyl phosphate from bicarbonate: step 1/1. It participates in pyrimidine metabolism; UMP biosynthesis via de novo pathway; (S)-dihydroorotate from bicarbonate: step 1/3. In terms of biological role, large subunit of the glutamine-dependent carbamoyl phosphate synthetase (CPSase). CPSase catalyzes the formation of carbamoyl phosphate from the ammonia moiety of glutamine, carbonate, and phosphate donated by ATP, constituting the first step of 2 biosynthetic pathways, one leading to arginine and/or urea and the other to pyrimidine nucleotides. The large subunit (synthetase) binds the substrates ammonia (free or transferred from glutamine from the small subunit), hydrogencarbonate and ATP and carries out an ATP-coupled ligase reaction, activating hydrogencarbonate by forming carboxy phosphate which reacts with ammonia to form carbamoyl phosphate. This chain is Carbamoyl phosphate synthase large chain, found in Clostridium perfringens (strain SM101 / Type A).